The chain runs to 39 residues: Cytochrome b559 subunit beta (39 aa).

The helical transmembrane segment at W14–S30 threads the bilayer. H18 lines the heme pocket.

Belongs to the PsbE/PsbF family. Heterodimer of an alpha subunit and a beta subunit. PSII is composed of 1 copy each of membrane proteins PsbA, PsbB, PsbC, PsbD, PsbE, PsbF, PsbH, PsbI, PsbJ, PsbK, PsbL, PsbM, PsbT, PsbX, PsbY, PsbZ, Psb30/Ycf12, at least 3 peripheral proteins of the oxygen-evolving complex and a large number of cofactors. It forms dimeric complexes. Heme b is required as a cofactor.

The protein localises to the plastid. It localises to the chloroplast thylakoid membrane. Functionally, this b-type cytochrome is tightly associated with the reaction center of photosystem II (PSII). PSII is a light-driven water:plastoquinone oxidoreductase that uses light energy to abstract electrons from H(2)O, generating O(2) and a proton gradient subsequently used for ATP formation. It consists of a core antenna complex that captures photons, and an electron transfer chain that converts photonic excitation into a charge separation. The sequence is that of Cytochrome b559 subunit beta from Psilotum nudum (Whisk fern).